The primary structure comprises 506 residues: Probable malate:quinone oxidoreductase (506 aa).

The protein belongs to the MQO family. It depends on FAD as a cofactor.

The enzyme catalyses (S)-malate + a quinone = a quinol + oxaloacetate. It functions in the pathway carbohydrate metabolism; tricarboxylic acid cycle; oxaloacetate from (S)-malate (quinone route): step 1/1. This is Probable malate:quinone oxidoreductase from Rhodococcus jostii (strain RHA1).